An 800-amino-acid chain; its full sequence is Receptor-like protein 47 (800 aa).

Residues 1–31 form the signal peptide; sequence MMHSSSVRRMITVKWSLCLIFCLTNSILVSA. The Extracellular portion of the chain corresponds to 32–759; sequence KHLCLPDQKD…QDEDKEEEDQ (728 aa). Residues asparagine 66 and asparagine 102 are each glycosylated (N-linked (GlcNAc...) asparagine). 23 LRR repeats span residues 109–131, 133–156, 157–179, 190–213, 214–238, 240–262, 263–288, 294–311, 312–334, 335–358, 360–383, 385–406, 407–430, 431–453, 455–477, 479–500, 502–523, 524–550, 551–574, 621–645, 646–669, 670–693, and 695–718; these read QHLQ…SIGN, KRLK…LGNL, SYLT…SMGN, LSSV…NMSS, LSKL…LFMI, SLIL…NISS, PSNL…IFSP, YLDV…VSLP, SPIE…LRNQ, TSLE…LWSL, ELRY…VIQG, RELL…LLPV, VSMN…ICEL, DNLR…CFEN, HLYV…AISH, LQSF…LINC, DIEF…WLEL, LPNL…SLSF, SRLR…YFVG, FTIY…IGLL, KEVI…LSNL, SNLQ…LGKL, and FLEW…QIQT. Asparagine 155 is a glycosylation site (N-linked (GlcNAc...) asparagine). Asparagine 210 is a glycosylation site (N-linked (GlcNAc...) asparagine). Asparagine 259 is a glycosylation site (N-linked (GlcNAc...) asparagine). N-linked (GlcNAc...) asparagine glycosylation is found at asparagine 323 and asparagine 333. A glycan (N-linked (GlcNAc...) asparagine) is linked at asparagine 365. N-linked (GlcNAc...) asparagine glycans are attached at residues asparagine 442, asparagine 465, asparagine 499, and asparagine 514. The N-linked (GlcNAc...) asparagine glycan is linked to asparagine 668. Asparagine 700 carries N-linked (GlcNAc...) asparagine glycosylation. A helical transmembrane segment spans residues 760–780; that stretch reads VFSWIAAAIGYVPGVVCGLTI. The Cytoplasmic portion of the chain corresponds to 781-800; the sequence is GHILVSHKRDWFMRIVSFFT.

The protein belongs to the RLP family.

It localises to the cell membrane. This chain is Receptor-like protein 47, found in Arabidopsis thaliana (Mouse-ear cress).